Reading from the N-terminus, the 114-residue chain is uncharacterized protein (114 aa).

Fe cation contacts are provided by Cys-40, Cys-106, and Cys-108.

This sequence belongs to the HesB/IscA family. Ycf83 subfamily.

Its subcellular location is the plastid. It is found in the chloroplast. This is an uncharacterized protein from Pyropia yezoensis (Susabi-nori).